The sequence spans 350 residues: Quercetin 2,3-dioxygenase (350 aa).

The tract at residues 1–145 is cupin 1; sequence DTSSLIVEDA…FYYLGTNATD (145 aa). Cu cation is bound by residues His-66, His-68, and Glu-73. His-66 is a substrate binding site. Substrate is bound at residue Glu-73. Residues Asn-90 and Asn-109 are each glycosylated (N-linked (GlcNAc...) asparagine). His-112 is a Cu cation binding site. Asn-142 carries an N-linked (GlcNAc...) asparagine glycan. Residues 146-205 are linker; sequence TTHTPYIPSSSDSSSTTGPDSSTISTLQSFDVYAELSFTPRTDTVNGTAPANTVWHTGAN. The tract at residues 148–167 is disordered; it reads HTPYIPSSSDSSSTTGPDSS. The span at 152–167 shows a compositional bias: low complexity; it reads IPSSSDSSSTTGPDSS. N-linked (GlcNAc...) asparagine glycosylation is found at Asn-191 and Asn-248. The segment at 206 to 350 is cupin 2; sequence ALASTAGDPY…WSSVSFPADW (145 aa).

Homodimer. The cofactor is Cu cation. The N-linked glycan at Asn-191 consists of Man(5)-GlcNAc(2).

It carries out the reaction quercetin + O2 = 2-(3,4-dihydroxybenzoyloxy)-4,6-dihydroxybenzoate + CO. The protein operates within flavonoid metabolism; quercetin degradation. Its activity is regulated as follows. Inhibited by diethyldithiocarbamate and kojic acid. Functionally, performs the first step in the degradation of the flavonoid quercetin by a dioxygenase reaction. The enzyme catalyzes the cleavage of the O-heteroaromatic ring of the flavonol quercetin yielding the depside 2-protocatechuoyl-phloroglucinol carboxylic acid and carbon monoxide. This involves the remarkable dioxygenolytic cleavage of two carbon-carbon bonds. In Aspergillus japonicus, this protein is Quercetin 2,3-dioxygenase.